The sequence spans 460 residues: Probable fibrosin-1 (460 aa).

Lys8 is covalently cross-linked (Glycyl lysine isopeptide (Lys-Gly) (interchain with G-Cter in SUMO2)). Disordered stretches follow at residues Ser40–Pro79, Phe205–Ala311, and Tyr406–Arg460. Residues Gly212–Pro223 show a composition bias toward pro residues. 2 positions are modified to asymmetric dimethylarginine: Arg229 and Arg239. Residues Gly248 to Pro272 are compositionally biased toward basic and acidic residues. Residue Ser281 is modified to Phosphoserine. Residues Arg288–Ala311 are compositionally biased toward basic and acidic residues. Pro residues predominate over residues Ala436–Pro453.

This is Probable fibrosin-1 (FBRS) from Homo sapiens (Human).